The primary structure comprises 78 residues: MSKVCQVTGKRPTTGNNVSHANNKTKRRFLPNLHHHRFWVESEQRFVRLRVSSKGMRIIDRKGIDQVLSDLRARGEKV.

The tract at residues 1-22 is disordered; it reads MSKVCQVTGKRPTTGNNVSHAN. Residues 11 to 22 are compositionally biased toward polar residues; it reads RPTTGNNVSHAN.

This sequence belongs to the bacterial ribosomal protein bL28 family.

This chain is Large ribosomal subunit protein bL28, found in Alkalilimnicola ehrlichii (strain ATCC BAA-1101 / DSM 17681 / MLHE-1).